Here is a 252-residue protein sequence, read N- to C-terminus: Ribosomal RNA small subunit methyltransferase A (252 aa).

Asn-11, Leu-13, Gly-38, Glu-60, Asp-82, and Asn-99 together coordinate S-adenosyl-L-methionine.

This sequence belongs to the class I-like SAM-binding methyltransferase superfamily. rRNA adenine N(6)-methyltransferase family. RsmA subfamily.

It is found in the cytoplasm. It carries out the reaction adenosine(1518)/adenosine(1519) in 16S rRNA + 4 S-adenosyl-L-methionine = N(6)-dimethyladenosine(1518)/N(6)-dimethyladenosine(1519) in 16S rRNA + 4 S-adenosyl-L-homocysteine + 4 H(+). Its function is as follows. Specifically dimethylates two adjacent adenosines (A1518 and A1519) in the loop of a conserved hairpin near the 3'-end of 16S rRNA in the 30S particle. May play a critical role in biogenesis of 30S subunits. This is Ribosomal RNA small subunit methyltransferase A from Hydrogenobaculum sp. (strain Y04AAS1).